Consider the following 185-residue polypeptide: Ribosome-recycling factor (185 aa).

This sequence belongs to the RRF family.

Its subcellular location is the cytoplasm. In terms of biological role, responsible for the release of ribosomes from messenger RNA at the termination of protein biosynthesis. May increase the efficiency of translation by recycling ribosomes from one round of translation to another. The polypeptide is Ribosome-recycling factor (Desulfosudis oleivorans (strain DSM 6200 / JCM 39069 / Hxd3) (Desulfococcus oleovorans)).